A 504-amino-acid polypeptide reads, in one-letter code: Maturase K (504 aa).

Belongs to the intron maturase 2 family. MatK subfamily.

It is found in the plastid. The protein localises to the chloroplast. Its function is as follows. Usually encoded in the trnK tRNA gene intron. Probably assists in splicing its own and other chloroplast group II introns. The polypeptide is Maturase K (Alliaria petiolata (Garlic mustard)).